The primary structure comprises 386 residues: Mannitol-1-phosphate 5-dehydrogenase (386 aa).

An NAD(+)-binding site is contributed by 4–15 (AIHFGGGNIGRG). Residue K211 is part of the active site.

This sequence belongs to the mannitol dehydrogenase family. As to quaternary structure, monomer.

The enzyme catalyses D-mannitol 1-phosphate + NAD(+) = beta-D-fructose 6-phosphate + NADH + H(+). Functionally, catalyzes the NAD(H)-dependent interconversion of D-fructose 6-phosphate and D-mannitol 1-phosphate in the mannitol metabolic pathway. The protein is Mannitol-1-phosphate 5-dehydrogenase (mpdA) of Emericella nidulans (strain FGSC A4 / ATCC 38163 / CBS 112.46 / NRRL 194 / M139) (Aspergillus nidulans).